Consider the following 392-residue polypeptide: Lysine acetyltransferase (392 aa).

The enzyme catalyses L-lysine + acetyl-CoA = N(6)-acetyl-L-lysine + CoA + H(+). It participates in amino-acid degradation; L-lysine degradation via acetylation pathway; glutarate from L-lysine: step 1/6. Activity is inhibited by 5-aminovalerate. Lysine N-6-acetyl transferase (LAT) that catalyzes the first step of the lysine degradation pathway. This Yarrowia lipolytica (strain CLIB 122 / E 150) (Yeast) protein is Lysine acetyltransferase.